We begin with the raw amino-acid sequence, 476 residues long: Aspartyl/glutamyl-tRNA(Asn/Gln) amidotransferase subunit B (476 aa).

Belongs to the GatB/GatE family. GatB subfamily. As to quaternary structure, heterotrimer of A, B and C subunits.

It catalyses the reaction L-glutamyl-tRNA(Gln) + L-glutamine + ATP + H2O = L-glutaminyl-tRNA(Gln) + L-glutamate + ADP + phosphate + H(+). It carries out the reaction L-aspartyl-tRNA(Asn) + L-glutamine + ATP + H2O = L-asparaginyl-tRNA(Asn) + L-glutamate + ADP + phosphate + 2 H(+). In terms of biological role, allows the formation of correctly charged Asn-tRNA(Asn) or Gln-tRNA(Gln) through the transamidation of misacylated Asp-tRNA(Asn) or Glu-tRNA(Gln) in organisms which lack either or both of asparaginyl-tRNA or glutaminyl-tRNA synthetases. The reaction takes place in the presence of glutamine and ATP through an activated phospho-Asp-tRNA(Asn) or phospho-Glu-tRNA(Gln). This is Aspartyl/glutamyl-tRNA(Asn/Gln) amidotransferase subunit B from Clostridium botulinum (strain Okra / Type B1).